Reading from the N-terminus, the 417-residue chain is MLEQMGIAAKQASYKLAQLSSREKNRVLEKIADELEAQSEIILNANAQDVADARANGLSEAMLDRLALTPARLKGIADDVRQVCNLADPVGQVIDGGVLDSGLRLERRRVPLGVIGVIYEARPNVTVDVASLCLKTGNAVILRGGKETCRTNAATVVVIQDALKSCGLPAGAVQAIDNPDRALVSEMLRMDKYIDMLIPRGGAGLHKLCREQSTIPVITGGIGVCHIYVDESAEIAEALKVIVNAKTQRPSTCNTVETLLVNKNIAYSFLPALSKQMAESGVTLHADASALAQLQTGPAKVVAVKAEEYDDEFLSLDLNVKIVSDLDDAIAHIREHGTQHSDAILTRDMRNAQRFVNEVDSSAVYVNASTRFTDGGQFGLGAEVAVSTQKLHARGPMGLEALTTYKWIGIGDYTIRA.

It belongs to the gamma-glutamyl phosphate reductase family.

It is found in the cytoplasm. It carries out the reaction L-glutamate 5-semialdehyde + phosphate + NADP(+) = L-glutamyl 5-phosphate + NADPH + H(+). It participates in amino-acid biosynthesis; L-proline biosynthesis; L-glutamate 5-semialdehyde from L-glutamate: step 2/2. Functionally, catalyzes the NADPH-dependent reduction of L-glutamate 5-phosphate into L-glutamate 5-semialdehyde and phosphate. The product spontaneously undergoes cyclization to form 1-pyrroline-5-carboxylate. The chain is Gamma-glutamyl phosphate reductase from Escherichia coli O157:H7.